The chain runs to 690 residues: Elongation factor G (690 aa).

Positions 8–283 constitute a tr-type G domain; sequence SKCRNIGIMA…AVVDFLPAPN (276 aa). GTP-binding positions include 17–24, 81–85, and 135–138; these read AHIDAGKT, DTPGH, and NKMD.

This sequence belongs to the TRAFAC class translation factor GTPase superfamily. Classic translation factor GTPase family. EF-G/EF-2 subfamily.

Its subcellular location is the cytoplasm. Functionally, catalyzes the GTP-dependent ribosomal translocation step during translation elongation. During this step, the ribosome changes from the pre-translocational (PRE) to the post-translocational (POST) state as the newly formed A-site-bound peptidyl-tRNA and P-site-bound deacylated tRNA move to the P and E sites, respectively. Catalyzes the coordinated movement of the two tRNA molecules, the mRNA and conformational changes in the ribosome. The protein is Elongation factor G of Ehrlichia canis (strain Jake).